The chain runs to 403 residues: Tyrosine--tRNA ligase (403 aa).

The 'HIGH' region signature appears at 43–52; it reads PTAPDLHLGH. The 'KMSKS' region motif lies at 227-231; sequence KMSKS. Lys230 contacts ATP. Positions 338–399 constitute an S4 RNA-binding domain; the sequence is LPIAQLLKQT…GKRKFARVTI (62 aa).

This sequence belongs to the class-I aminoacyl-tRNA synthetase family. TyrS type 2 subfamily. In terms of assembly, homodimer.

The protein resides in the cytoplasm. It carries out the reaction tRNA(Tyr) + L-tyrosine + ATP = L-tyrosyl-tRNA(Tyr) + AMP + diphosphate + H(+). Its function is as follows. Catalyzes the attachment of tyrosine to tRNA(Tyr) in a two-step reaction: tyrosine is first activated by ATP to form Tyr-AMP and then transferred to the acceptor end of tRNA(Tyr). The sequence is that of Tyrosine--tRNA ligase from Nitrosospira multiformis (strain ATCC 25196 / NCIMB 11849 / C 71).